A 336-amino-acid polypeptide reads, in one-letter code: Fructose-1,6-bisphosphatase class 1 (336 aa).

The Mg(2+) site is built by glutamate 90, aspartate 112, leucine 114, and aspartate 115. Substrate is bound by residues aspartate 115–serine 118, asparagine 211, and lysine 277. Glutamate 283 contacts Mg(2+).

It belongs to the FBPase class 1 family. In terms of assembly, homotetramer. Requires Mg(2+) as cofactor.

It is found in the cytoplasm. It catalyses the reaction beta-D-fructose 1,6-bisphosphate + H2O = beta-D-fructose 6-phosphate + phosphate. It participates in carbohydrate biosynthesis; gluconeogenesis. The polypeptide is Fructose-1,6-bisphosphatase class 1 (Pseudomonas paraeruginosa (strain DSM 24068 / PA7) (Pseudomonas aeruginosa (strain PA7))).